A 73-amino-acid chain; its full sequence is Alpha-amylase inhibitor Paim-1 (73 aa).

Disulfide bonds link Cys-8/Cys-24 and Cys-42/Cys-70.

In terms of biological role, inhibits mammalian alpha-amylases specifically but has no action on plant and microbial alpha-amylases. This chain is Alpha-amylase inhibitor Paim-1, found in Streptomyces olivaceoviridis (Streptomyces corchorusii).